A 356-amino-acid polypeptide reads, in one-letter code: tRNA N6-adenosine threonylcarbamoyltransferase (356 aa).

Positions 115 and 119 each coordinate Fe cation. Substrate contacts are provided by residues 138-142, aspartate 171, glycine 184, and asparagine 283; that span reads LVSGG. A Fe cation-binding site is contributed by aspartate 311.

The protein belongs to the KAE1 / TsaD family. Fe(2+) serves as cofactor.

The protein localises to the cytoplasm. The catalysed reaction is L-threonylcarbamoyladenylate + adenosine(37) in tRNA = N(6)-L-threonylcarbamoyladenosine(37) in tRNA + AMP + H(+). Its function is as follows. Required for the formation of a threonylcarbamoyl group on adenosine at position 37 (t(6)A37) in tRNAs that read codons beginning with adenine. Is involved in the transfer of the threonylcarbamoyl moiety of threonylcarbamoyl-AMP (TC-AMP) to the N6 group of A37, together with TsaE and TsaB. TsaD likely plays a direct catalytic role in this reaction. This is tRNA N6-adenosine threonylcarbamoyltransferase from Prochlorococcus marinus (strain AS9601).